The following is a 325-amino-acid chain: L-lactate dehydrogenase 1 (325 aa).

NAD(+) contacts are provided by residues valine 17, aspartate 38, lysine 43, tyrosine 68, and glycine 82–alanine 83. Substrate-binding positions include glutamine 85, arginine 91, and asparagine 123–aspartate 126. NAD(+)-binding positions include alanine 121–asparagine 123 and serine 146. Position 151–154 (aspartate 151–arginine 154) interacts with substrate. The beta-D-fructose 1,6-bisphosphate site is built by arginine 156 and histidine 171. The Proton acceptor role is filled by histidine 178. Tyrosine 223 carries the post-translational modification Phosphotyrosine. Threonine 232 is a substrate binding site.

The protein belongs to the LDH/MDH superfamily. LDH family. Homotetramer.

Its subcellular location is the cytoplasm. It catalyses the reaction (S)-lactate + NAD(+) = pyruvate + NADH + H(+). It participates in fermentation; pyruvate fermentation to lactate; (S)-lactate from pyruvate: step 1/1. Its activity is regulated as follows. Allosterically activated by fructose 1,6-bisphosphate (FBP). Catalyzes the conversion of lactate to pyruvate. The sequence is that of L-lactate dehydrogenase 1 from Lactococcus lactis subsp. lactis (strain IL1403) (Streptococcus lactis).